We begin with the raw amino-acid sequence, 191 residues long: Protein GrpE (191 aa).

The interval 1-22 is disordered; it reads MKDKHNQEHDHLSQEEPESCEK.

It belongs to the GrpE family. In terms of assembly, homodimer.

Its subcellular location is the cytoplasm. Its function is as follows. Participates actively in the response to hyperosmotic and heat shock by preventing the aggregation of stress-denatured proteins, in association with DnaK and GrpE. It is the nucleotide exchange factor for DnaK and may function as a thermosensor. Unfolded proteins bind initially to DnaJ; upon interaction with the DnaJ-bound protein, DnaK hydrolyzes its bound ATP, resulting in the formation of a stable complex. GrpE releases ADP from DnaK; ATP binding to DnaK triggers the release of the substrate protein, thus completing the reaction cycle. Several rounds of ATP-dependent interactions between DnaJ, DnaK and GrpE are required for fully efficient folding. The chain is Protein GrpE from Helicobacter pylori (strain Shi470).